A 335-amino-acid chain; its full sequence is tRNA N6-adenosine threonylcarbamoyltransferase (335 aa).

Positions 109, 113, and 130 each coordinate a divalent metal cation. Substrate contacts are provided by residues 130–134 (YVSGG), aspartate 162, glycine 177, glutamate 181, and asparagine 266. Aspartate 294 is an a divalent metal cation binding site.

It belongs to the KAE1 / TsaD family. Component of the EKC/KEOPS complex composed of at least tp53rk, tprkb, osgep and lage3; the whole complex dimerizes. The cofactor is a divalent metal cation.

The protein localises to the cytoplasm. It localises to the nucleus. It carries out the reaction L-threonylcarbamoyladenylate + adenosine(37) in tRNA = N(6)-L-threonylcarbamoyladenosine(37) in tRNA + AMP + H(+). Component of the EKC/KEOPS complex that is required for the formation of a threonylcarbamoyl group on adenosine at position 37 (t(6)A37) in tRNAs that read codons beginning with adenine. The complex is probably involved in the transfer of the threonylcarbamoyl moiety of threonylcarbamoyl-AMP (TC-AMP) to the N6 group of A37. Osgep likely plays a direct catalytic role in this reaction, but requires other protein(s) of the complex to fulfill this activity. The protein is tRNA N6-adenosine threonylcarbamoyltransferase of Xenopus laevis (African clawed frog).